The following is a 274-amino-acid chain: Shikimate dehydrogenase (NADP(+)) (274 aa).

Shikimate is bound by residues 14-16 and Thr61; that span reads SKS. Lys65 (proton acceptor) is an active-site residue. Glu77 contributes to the NADP(+) binding site. Asn86 and Asp102 together coordinate shikimate. NADP(+) is bound by residues 126–130, 149–154, and Met212; these read GAGGA and NRTLEK. Tyr214 serves as a coordination point for shikimate. Position 237 (Gly237) interacts with NADP(+).

It belongs to the shikimate dehydrogenase family. Homodimer.

It carries out the reaction shikimate + NADP(+) = 3-dehydroshikimate + NADPH + H(+). It functions in the pathway metabolic intermediate biosynthesis; chorismate biosynthesis; chorismate from D-erythrose 4-phosphate and phosphoenolpyruvate: step 4/7. In terms of biological role, involved in the biosynthesis of the chorismate, which leads to the biosynthesis of aromatic amino acids. Catalyzes the reversible NADPH linked reduction of 3-dehydroshikimate (DHSA) to yield shikimate (SA). This chain is Shikimate dehydrogenase (NADP(+)), found in Actinobacillus pleuropneumoniae serotype 5b (strain L20).